Consider the following 297-residue polypeptide: Tryptophan 2,3-dioxygenase (297 aa).

Substrate is bound by residues 51-55 (FIIQH), Y113, and R117. H240 is a heme binding site. Residue T254 coordinates substrate.

It belongs to the tryptophan 2,3-dioxygenase family. In terms of assembly, homotetramer. The cofactor is heme.

It catalyses the reaction L-tryptophan + O2 = N-formyl-L-kynurenine. It participates in amino-acid degradation; L-tryptophan degradation via kynurenine pathway; L-kynurenine from L-tryptophan: step 1/2. Heme-dependent dioxygenase that catalyzes the oxidative cleavage of the L-tryptophan (L-Trp) pyrrole ring and converts L-tryptophan to N-formyl-L-kynurenine. Catalyzes the oxidative cleavage of the indole moiety. The sequence is that of Tryptophan 2,3-dioxygenase from Xanthomonas oryzae pv. oryzae (strain MAFF 311018).